The chain runs to 475 residues: Tubulin gamma-1 chain (475 aa).

142–148 (AGGTGSG) is a binding site for GTP. Positions 453-475 (VKRGNGPVDSKSEDSRSVTSAGS) are disordered.

This sequence belongs to the tubulin family. In terms of assembly, interacts with Ote.

Its subcellular location is the cytoplasm. It localises to the cytoskeleton. It is found in the microtubule organizing center. The protein localises to the centrosome. The protein resides in the perinuclear region. Functionally, tubulin is the major constituent of microtubules. The gamma chain is found at microtubule organizing centers (MTOC) such as the spindle poles or the centrosome, suggesting that it is involved in the minus-end nucleation of microtubule assembly. The chain is Tubulin gamma-1 chain (gammaTub23C) from Drosophila melanogaster (Fruit fly).